Reading from the N-terminus, the 240-residue chain is Small ribosomal subunit protein uS2 (240 aa).

This sequence belongs to the universal ribosomal protein uS2 family.

The sequence is that of Small ribosomal subunit protein uS2 (rpsB) from Pasteurella multocida (strain Pm70).